Consider the following 169-residue polypeptide: S-ribosylhomocysteine lyase (169 aa).

Residues His54, His58, and Cys128 each coordinate Fe cation.

This sequence belongs to the LuxS family. In terms of assembly, homodimer. Fe cation is required as a cofactor.

It carries out the reaction S-(5-deoxy-D-ribos-5-yl)-L-homocysteine = (S)-4,5-dihydroxypentane-2,3-dione + L-homocysteine. In terms of biological role, involved in the synthesis of autoinducer 2 (AI-2) which is secreted by bacteria and is used to communicate both the cell density and the metabolic potential of the environment. The regulation of gene expression in response to changes in cell density is called quorum sensing. Catalyzes the transformation of S-ribosylhomocysteine (RHC) to homocysteine (HC) and 4,5-dihydroxy-2,3-pentadione (DPD). The sequence is that of S-ribosylhomocysteine lyase from Shewanella sp. (strain ANA-3).